A 272-amino-acid chain; its full sequence is Plastid division protein PDV1 (272 aa).

Over 1–206 (MGEMEIEEIE…KRALGFNHVK (206 aa)) the chain is Cytoplasmic. Positions 40 to 61 (KPSNRSEKRKNPHGNSGEDKRP) are disordered. Positions 78–102 (IQEAKSLNAIRTALENLEDQLEFFH) form a coiled coil. Residues 207–225 (GVLGNAAIFAISVVAMLHL) traverse the membrane as a helical segment. The Chloroplast intermembrane portion of the chain corresponds to 226–272 (HQVATSEHHLQKKEDRFYRSQQRKTYGRDKSSADRSLDHLDVMMARG).

In terms of assembly, interacts (via C-terminus) with CDP1/PARC6 (via C-terminus). Interacts with ARC5/DRP5B. Expressed in young developing leaves, root tips, shoot apices, and flower buds (sepals, petals, stamens, and pistils), but not in developed tissues.

It is found in the plastid. It localises to the chloroplast outer membrane. Component of the plastid division machinery. Required to mediate the dissociation of ARC5/DRP5B from plastid outer envelope membranes (OEMs) at the midplastid constriction site in the cytoplasm, thus triggering ARC5/DRP5B ring turnover at the chloroplast division site. Binding to phosphatidylinositol 4-phosphate (PI4P) modulates negatively chloroplast division. This Arabidopsis thaliana (Mouse-ear cress) protein is Plastid division protein PDV1.